The chain runs to 393 residues: MYLIGEALIGEGSELAHVDLIVGDKNGPVGMAFANALSQLSAGHTPLLAVVRPNLLTKPATVVIPKVTLKNEGQVNQMFGPVQAAVAKAVADAVEEGLFGDININDICILASAFLHPSAKDYNRIYRYNYGATKLAISRAFEEFPDEKTLIHEKDRAAHAVMGFKVPRLWDPPYLQVALDIVDLGKLRSVLSSLPENDHLIIEAGTPLIKKFGLNVISEIRAVKPNAFIVADMKILDTGNLEARMAADSSADAVVMSGLAPASTIEKAITEARKTGIYSVIDMLNVEDPVGLIASLKVKPDIVELHRAIDAEHTSHAWGNIGDIKKAAGGKLLVATAGGIRVPVVKEALKTGADILVVGRAITASKDVRHAAEEFLEQLNKEEIDQFRIMTDF.

Positions 1-161 are formaldehyde-activating enzyme; sequence MYLIGEALIG…HEKDRAAHAV (161 aa). Residue His17 is the Proton donor of the active site. 5 residues coordinate substrate: Asp19, Leu48, Lys66, Thr68, and Gln83. Residues 162–393 are 3-hexulose-6-phosphate synthase; the sequence is MGFKVPRLWD…IDQFRIMTDF (232 aa).

It in the N-terminal section; belongs to the formaldehyde-activating enzyme family. In the C-terminal section; belongs to the HPS/KGPDC family. HPS subfamily.

The enzyme catalyses 5,6,7,8-tetrahydromethanopterin + formaldehyde = 5,10-methylenetetrahydromethanopterin + H2O. The catalysed reaction is D-ribulose 5-phosphate + formaldehyde = D-arabino-hex-3-ulose 6-phosphate. Its pathway is carbohydrate biosynthesis; D-ribose 5-phosphate biosynthesis. Functionally, catalyzes the condensation of formaldehyde with tetrahydromethanopterin (H(4)MPT) to 5,10-methylenetetrahydromethanopterin. Catalyzes the reversible formation of ribulose-5-phosphate and formaldehyde from 3-hexulose-6-phosphate. In Methanospirillum hungatei JF-1 (strain ATCC 27890 / DSM 864 / NBRC 100397 / JF-1), this protein is Bifunctional enzyme Fae/Hps.